The sequence spans 159 residues: MEQDWQPGEEVTPGPEPCSKGQAPLYPIVHVTELKHTDPNFPSNSNAVGTSSGWNRIGTGCSHTWDWRFSCTQQALLPLLGAWEWSIDTEAGGGRREQSQKPCSNGGPAAAGEGRVLPSPCFPWSTCQAAIHKVCRWQGCTRPALLAPSLATLKEHSYP.

2 disordered regions span residues 1–23 (MEQD…KGQA) and 91–110 (AGGG…GPAA).

This is an uncharacterized protein from Homo sapiens (Human).